An 855-amino-acid polypeptide reads, in one-letter code: Envelope glycoprotein gp150 (855 aa).

At 1–784 (MAEGGFTHNQ…WIGKIPQYLK (784 aa)) the chain is on the extracellular side. N-linked (GlcNAc...) asparagine; by host glycans are attached at residues Asn135, Asn220, Asn258, Asn269, Asn274, Asn298, Asn330, Asn336, Asn342, Asn372, Asn418, Asn422, Asn448, Asn469, Asn481, Asn499, Asn518, Asn531, Asn548, and Asn551. A fusion peptide region spans residues 615-635 (IMLALATVLSMAGAGTGATAI). Positions 642–692 (HQVLATHQQALEKITEALKINNLRLITLEHQVLVIGLRVEAIEKFLYTAFA) form a coiled coil. Residues 661–679 (INNLRLITLEHQVLVIGLR) form an immunosuppression region. Asn716, Asn720, Asn728, and Asn736 each carry an N-linked (GlcNAc...) asparagine; by host glycan. A coiled-coil region spans residues 735 to 771 (YNQTRDLQNKFYEIIMDIEQNNVQGKTGIQQLQKWEN). The helical transmembrane segment at 785 to 805 (GLLGSVLGIGLGILLLLICLP) threads the bilayer. Residues 806–855 (TLVDCIRNCTNKILGYTVIAMPEIDDEEVHLSVELRRNGRQCGISEKEEE) lie on the Cytoplasmic side of the membrane.

In terms of assembly, the mature envelope protein (Env) consists of a trimer of SU-TM heterodimers attached by noncovalent interactions or by a labile interchain disulfide bond. Post-translationally, specific enzymatic cleavages in vivo yield mature proteins. Envelope glycoproteins are synthesized as an inactive precursor that is N-glycosylated and processed likely by host cell furin or by a furin-like protease in the Golgi to yield the mature SU and TM proteins. The cleavage site between SU and TM requires the minimal sequence [KR]-X-[KR]-R.

Its subcellular location is the virion membrane. The protein resides in the host cell membrane. Its function is as follows. The surface protein (SU) attaches the virus to the host cell by binding to its receptor. This interaction triggers the refolding of the transmembrane protein (TM) and is thought to activate its fusogenic potential by unmasking its fusion peptide. Fusion occurs at the host cell plasma membrane. The transmembrane protein (TM) acts as a class I viral fusion protein. Under the current model, the protein has at least 3 conformational states: pre-fusion native state, pre-hairpin intermediate state, and post-fusion hairpin state. During viral and target cell membrane fusion, the coiled coil regions (heptad repeats) assume a trimer-of-hairpins structure, positioning the fusion peptide in close proximity to the C-terminal region of the ectodomain. The formation of this structure appears to drive apposition and subsequent fusion of viral and target cell membranes. Membranes fusion leads to delivery of the nucleocapsid into the cytoplasm. The polypeptide is Envelope glycoprotein gp150 (env) (Feline immunodeficiency virus (isolate TM2) (FIV)).